Here is a 446-residue protein sequence, read N- to C-terminus: Argininosuccinate synthase (446 aa).

ATP-binding positions include 17–25 (AFSGGLDTS) and A43. An L-citrulline-binding site is contributed by Y99. ATP contacts are provided by G129 and T131. 3 residues coordinate L-aspartate: T131, N135, and D136. N135 is a binding site for L-citrulline. D136 serves as a coordination point for ATP. Residues R139 and S192 each coordinate L-citrulline. D194 serves as a coordination point for ATP. 3 residues coordinate L-citrulline: T201, E203, and E280.

It belongs to the argininosuccinate synthase family. Type 2 subfamily. As to quaternary structure, homotetramer.

It is found in the cytoplasm. The catalysed reaction is L-citrulline + L-aspartate + ATP = 2-(N(omega)-L-arginino)succinate + AMP + diphosphate + H(+). Its pathway is amino-acid biosynthesis; L-arginine biosynthesis; L-arginine from L-ornithine and carbamoyl phosphate: step 2/3. In Polaromonas sp. (strain JS666 / ATCC BAA-500), this protein is Argininosuccinate synthase.